The sequence spans 290 residues: Large ribosomal subunit protein uL2m (290 aa).

The protein belongs to the universal ribosomal protein uL2 family. Probably part of the large ribosomal subunit.

Its subcellular location is the hydrogenosome. The chain is Large ribosomal subunit protein uL2m (rpl2) from Nyctotherus ovalis.